A 435-amino-acid chain; its full sequence is Monodehydroascorbate reductase 3, cytosolic (435 aa).

Residues 14-17, E41, R48, K53, I96, and 147-148 each bind FAD; these read GGVA and RE. Residues 172–178, E196, R202, and G261 each bind NAD(+); that span reads GGYIGLE. 174-178 contributes to the NADP(+) binding site; sequence YIGLE. The NADP(+) site is built by R202 and G261. Residue D298 participates in FAD binding. 314 to 315 provides a ligand contact to NAD(+); it reads EH. Residue 314–315 participates in NADP(+) binding; sequence EH. V316 provides a ligand contact to FAD. R320 is an L-ascorbate binding site. Y349 contributes to the FAD binding site. Y349 serves as a coordination point for NAD(+). Y349 lines the NADP(+) pocket. R351 contacts L-ascorbate.

The protein belongs to the FAD-dependent oxidoreductase family. FAD serves as cofactor.

Its subcellular location is the cytoplasm. It carries out the reaction 2 monodehydro-L-ascorbate radical + NADH + H(+) = 2 L-ascorbate + NAD(+). Catalyzes the conversion of monodehydroascorbate to ascorbate, oxidizing NADH in the process. Ascorbate is a major antioxidant against reactive oxygen species (ROS) and nitric oxide (NO). Can use NADPH as electron donor, but possesses lower activity compared to NADH as electron donor. In Oryza sativa subsp. japonica (Rice), this protein is Monodehydroascorbate reductase 3, cytosolic.